A 301-amino-acid chain; its full sequence is Glycerol-3-phosphate dehydrogenase [NAD(P)+] (301 aa).

NADPH contacts are provided by Trp13, Arg33, and Lys78. Sn-glycerol 3-phosphate contacts are provided by Lys78 and Gly106. An NADPH-binding site is contributed by Ala110. Residues Lys161, Asp214, Ser224, Arg225, and Asn226 each coordinate sn-glycerol 3-phosphate. The active-site Proton acceptor is the Lys161. Arg225 serves as a coordination point for NADPH. Glu251 serves as a coordination point for NADPH.

Belongs to the NAD-dependent glycerol-3-phosphate dehydrogenase family.

The protein resides in the cytoplasm. It catalyses the reaction sn-glycerol 3-phosphate + NAD(+) = dihydroxyacetone phosphate + NADH + H(+). It carries out the reaction sn-glycerol 3-phosphate + NADP(+) = dihydroxyacetone phosphate + NADPH + H(+). Its pathway is membrane lipid metabolism; glycerophospholipid metabolism. Catalyzes the reduction of the glycolytic intermediate dihydroxyacetone phosphate (DHAP) to sn-glycerol 3-phosphate (G3P), the key precursor for phospholipid synthesis. This is Glycerol-3-phosphate dehydrogenase [NAD(P)+] from Synechococcus sp. (strain RCC307).